Here is a 610-residue protein sequence, read N- to C-terminus: tRNA uridine 5-carboxymethylaminomethyl modification enzyme MnmG (610 aa).

14–19 (GAGHAG) provides a ligand contact to FAD. Position 274–288 (274–288 (GPRYCPSIEDKIVKF)) interacts with NAD(+).

This sequence belongs to the MnmG family. In terms of assembly, homodimer. Heterotetramer of two MnmE and two MnmG subunits. Requires FAD as cofactor.

The protein resides in the cytoplasm. Functionally, NAD-binding protein involved in the addition of a carboxymethylaminomethyl (cmnm) group at the wobble position (U34) of certain tRNAs, forming tRNA-cmnm(5)s(2)U34. This Chlamydia muridarum (strain MoPn / Nigg) protein is tRNA uridine 5-carboxymethylaminomethyl modification enzyme MnmG.